Here is a 198-residue protein sequence, read N- to C-terminus: Transmembrane protein 9B (198 aa).

A signal peptide spans 1-33 (MATLWGGLLRLGSLLSLSCLALSVLLLAQLSDA). Asn60 carries N-linked (GlcNAc...) asparagine glycosylation. Residues 105–125 (IIIYLSILGLLLLYMVYLTLV) form a helical membrane-spanning segment. A phosphoserine mark is found at Ser142 and Ser189.

The protein belongs to the TMEM9 family. N-glycosylated.

It is found in the lysosome membrane. It localises to the early endosome membrane. In terms of biological role, enhances production of pro-inflammatory cytokines induced by TNF, IL1B, and TLR ligands. Has a role in TNF activation of both the NF-kappaB and MAPK pathways. This Homo sapiens (Human) protein is Transmembrane protein 9B (TMEM9B).